The primary structure comprises 143 residues: uncharacterized protein (143 aa).

To E.coli YifN.

This is an uncharacterized protein from Haemophilus influenzae (strain ATCC 51907 / DSM 11121 / KW20 / Rd).